Reading from the N-terminus, the 95-residue chain is Immunogenic miracidial antigen 8C (95 aa).

Residues 1–15 (EFTISFSSPVISTGQ) show a composition bias toward polar residues. Positions 1–95 (EFTISFSSPV…PKKYGSGHKY (95 aa)) are disordered. Residues 20–41 (GDEDYHDGDDDVDYTDDVDDVD) show a composition bias toward acidic residues. Polar residues predominate over residues 45 to 59 (GSPSQLLQGGYQRNQ).

It belongs to the immunogenic miracidial antigen family.

This is Immunogenic miracidial antigen 8C (8C) from Schistosoma japonicum (Blood fluke).